The sequence spans 158 residues: Cysteine-rich venom protein VAR7 (158 aa).

Residues 1 to 22 form the signal peptide; the sequence is MILLKLYLTLAAILCQSRGTTS. The region spanning 41 to 158 is the SCP domain; sequence NKHNDLRRTV…MGCAINLCPN (118 aa). Cys77 and Cys156 are disulfide-bonded.

This sequence belongs to the CRISP family. Contains 8 disulfide bonds. Expressed by the venom gland.

It is found in the secreted. In terms of biological role, blocks ryanodine receptors, and potassium channels. The chain is Cysteine-rich venom protein VAR7 from Varanus acanthurus (Ridge-tailed monitor).